The primary structure comprises 299 residues: Protoheme IX farnesyltransferase 1 (299 aa).

Helical transmembrane passes span 25-45 (VVVL…RAGV), 47-67 (WTVL…AAAV), 95-115 (TGAL…LLTF), 119-139 (LTAW…TGFL), 147-167 (IVIG…AATG), 173-193 (PLLL…ALAI), 226-246 (ALLA…LYLI), and 279-299 (IWYL…LLNL).

The protein belongs to the UbiA prenyltransferase family. Protoheme IX farnesyltransferase subfamily.

It is found in the cell inner membrane. The catalysed reaction is heme b + (2E,6E)-farnesyl diphosphate + H2O = Fe(II)-heme o + diphosphate. It participates in porphyrin-containing compound metabolism; heme O biosynthesis; heme O from protoheme: step 1/1. Converts heme B (protoheme IX) to heme O by substitution of the vinyl group on carbon 2 of heme B porphyrin ring with a hydroxyethyl farnesyl side group. The protein is Protoheme IX farnesyltransferase 1 of Pseudomonas fluorescens (strain Pf0-1).